The sequence spans 30 residues: Photosystem I reaction center subunit XII (30 aa).

A helical transmembrane segment spans residues 7–26 (IFVALLFALVSAVLAIRLGT).

Belongs to the PsaM family.

The protein localises to the plastid. Its subcellular location is the chloroplast thylakoid membrane. This Gracilaria tenuistipitata var. liui (Red alga) protein is Photosystem I reaction center subunit XII.